A 228-amino-acid polypeptide reads, in one-letter code: 2-C-methyl-D-erythritol 4-phosphate cytidylyltransferase (228 aa).

It belongs to the IspD/TarI cytidylyltransferase family. IspD subfamily.

The enzyme catalyses 2-C-methyl-D-erythritol 4-phosphate + CTP + H(+) = 4-CDP-2-C-methyl-D-erythritol + diphosphate. Its pathway is isoprenoid biosynthesis; isopentenyl diphosphate biosynthesis via DXP pathway; isopentenyl diphosphate from 1-deoxy-D-xylulose 5-phosphate: step 2/6. In terms of biological role, catalyzes the formation of 4-diphosphocytidyl-2-C-methyl-D-erythritol from CTP and 2-C-methyl-D-erythritol 4-phosphate (MEP). The chain is 2-C-methyl-D-erythritol 4-phosphate cytidylyltransferase from Nostoc sp. (strain PCC 7120 / SAG 25.82 / UTEX 2576).